The following is a 132-amino-acid chain: Small ribosomal subunit protein uS8 (132 aa).

Belongs to the universal ribosomal protein uS8 family. As to quaternary structure, part of the 30S ribosomal subunit. Contacts proteins S5 and S12.

Its function is as follows. One of the primary rRNA binding proteins, it binds directly to 16S rRNA central domain where it helps coordinate assembly of the platform of the 30S subunit. The protein is Small ribosomal subunit protein uS8 of Caldicellulosiruptor bescii (strain ATCC BAA-1888 / DSM 6725 / KCTC 15123 / Z-1320) (Anaerocellum thermophilum).